We begin with the raw amino-acid sequence, 225 residues long: MPNETNCTLDFEQSVQLFKEYNLFITAFLLFLTIILQYGYATRSKVIYTLKMIVLWCFWPLNIAVGVISCTYPPNTGGLVAAIILTVFACLSFVGYWIQSIRLFKRCRSWWSFNPESNAVGSILLTNGQQCNFAIESVPMVLSPIIKNGVLYCEGQWLAKCEPDHLPKDIFVCTPDRRNIYRMVQKYTGDQSGNKKRFATFVYAKQSVDTGELESVATGGSSLYT.

Residues 1 to 20 (MPNETNCTLDFEQSVQLFKE) are Virion surface-facing. Residues 21–41 (YNLFITAFLLFLTIILQYGYA) traverse the membrane as a helical segment. Residues 42–51 (TRSKVIYTLK) are Intravirion-facing. A helical membrane pass occupies residues 52–72 (MIVLWCFWPLNIAVGVISCTY). Topologically, residues 73–77 (PPNTG) are virion surface. The chain crosses the membrane as a helical span at residues 78 to 98 (GLVAAIILTVFACLSFVGYWI). The Intravirion segment spans residues 99–225 (QSIRLFKRCR…VATGGSSLYT (127 aa)).

It belongs to the gammacoronaviruses M protein family. Homomultimer. Interacts with envelope E protein in the budding compartment of the host cell, which is located between endoplasmic reticulum and the Golgi complex. Forms a complex with HE and S proteins. Interacts with nucleocapsid N protein. This interaction probably participates in RNA packaging into the virus.

The protein localises to the virion membrane. The protein resides in the host Golgi apparatus membrane. Functionally, component of the viral envelope that plays a central role in virus morphogenesis and assembly via its interactions with other viral proteins. This chain is Membrane protein, found in Avian infectious bronchitis virus (strain Beaudette) (IBV).